Consider the following 360-residue polypeptide: tRNA-specific 2-thiouridylase MnmA (360 aa).

ATP is bound by residues 9 to 16 (AMSGGVDS) and Leu35. Catalysis depends on Cys104, which acts as the Nucleophile. Residues Cys104 and Cys197 are joined by a disulfide bond. Gly128 provides a ligand contact to ATP. The interaction with tRNA stretch occupies residues 147 to 149 (KDQ). Catalysis depends on Cys197, which acts as the Cysteine persulfide intermediate.

Belongs to the MnmA/TRMU family.

It is found in the cytoplasm. The enzyme catalyses S-sulfanyl-L-cysteinyl-[protein] + uridine(34) in tRNA + AH2 + ATP = 2-thiouridine(34) in tRNA + L-cysteinyl-[protein] + A + AMP + diphosphate + H(+). Catalyzes the 2-thiolation of uridine at the wobble position (U34) of tRNA, leading to the formation of s(2)U34. The polypeptide is tRNA-specific 2-thiouridylase MnmA (Salinispora tropica (strain ATCC BAA-916 / DSM 44818 / JCM 13857 / NBRC 105044 / CNB-440)).